A 320-amino-acid chain; its full sequence is Phospho-N-acetylmuramoyl-pentapeptide-transferase (320 aa).

Transmembrane regions (helical) follow at residues 5 to 25 (LWALARAFIITVVFMPFLIKF), 51 to 71 (MGGLLFVLAAAISAFIGGAAY), 76 to 96 (GVVAMIIPVFALVAYAIIGGI), 124 to 144 (VVIMLIMWLLGVPFTLYIPMI), 145 to 165 (GTINLGLFYFVFLWFWLVGWS), 176 to 196 (GLLAGNSVVVYAAYTVIAMHM), 198 to 218 (NHIIVLFNFSIIGGLLGFLIF), 233 to 255 (LALGAGLAIESILLGVPFSLIWF), and 298 to 318 (WQIDLLFWIVSSILAVAGIFY).

The protein belongs to the glycosyltransferase 4 family. MraY subfamily. Mg(2+) serves as cofactor.

It localises to the cell membrane. The catalysed reaction is UDP-N-acetyl-alpha-D-muramoyl-L-alanyl-gamma-D-glutamyl-L-lysyl-D-alanyl-D-alanine + di-trans,octa-cis-undecaprenyl phosphate = Mur2Ac(oyl-L-Ala-gamma-D-Glu-L-Lys-D-Ala-D-Ala)-di-trans,octa-cis-undecaprenyl diphosphate + UMP. It functions in the pathway cell wall biogenesis; peptidoglycan biosynthesis. Catalyzes the initial step of the lipid cycle reactions in the biosynthesis of the cell wall peptidoglycan: transfers peptidoglycan precursor phospho-MurNAc-pentapeptide from UDP-MurNAc-pentapeptide onto the lipid carrier undecaprenyl phosphate, yielding undecaprenyl-pyrophosphoryl-MurNAc-pentapeptide, known as lipid I. This Leuconostoc citreum (strain KM20) protein is Phospho-N-acetylmuramoyl-pentapeptide-transferase.